The sequence spans 502 residues: Keratin-associated protein 16-1 (502 aa).

15 repeat units span residues 4 to 8 (CCCSR), 58 to 62 (CCQPS), 73 to 77 (CCEAT), 93 to 97 (CCEAT), 108 to 112 (CCQPV), 113 to 117 (CCEAT), 133 to 137 (CCEAT), 152 to 156 (CCETS), 177 to 181 (CCQPV), 187 to 191 (CCSAV), 212 to 216 (CCQPV), 222 to 226 (CCPSV), 272 to 276 (CCVQG), 292 to 296 (CCVSS), and 347 to 351 (CCRPG). A 15 X 5 AA repeats of C-C-X(3) region spans residues 73–307 (CCEATICEPS…CQPVCPEPSP (235 aa)). Residues 435 to 502 (RQPCTDSDND…QPAASKPADR (68 aa)) form a disordered region. The segment covering 489 to 502 (AAAPQPAASKPADR) has biased composition (low complexity).

Belongs to the KRTAP type 16 family. In terms of assembly, interacts with hair keratins.

Its function is as follows. In the hair cortex, hair keratin intermediate filaments are embedded in an interfilamentous matrix, consisting of hair keratin-associated proteins (KRTAP), which are essential for the formation of a rigid and resistant hair shaft through their extensive disulfide bond cross-linking with abundant cysteine residues of hair keratins. The matrix proteins include the high-sulfur and high-glycine-tyrosine keratins. The polypeptide is Keratin-associated protein 16-1 (Krtap16-1) (Mus musculus (Mouse)).